The following is a 334-amino-acid chain: Holliday junction branch migration complex subunit RuvB (334 aa).

The tract at residues 4-184 is large ATPase domain (RuvB-L); it reads ADRLIQPQIQ…FGIPLRLEFY (181 aa). ATP is bound by residues arginine 24, glycine 65, lysine 68, threonine 69, threonine 70, 131-133, arginine 174, tyrosine 184, and arginine 221; that span reads EDY. Residue threonine 69 participates in Mg(2+) binding. Residues 185–255 are small ATPAse domain (RuvB-S); the sequence is NIKDLSTIVT…VAEHALDLLD (71 aa). Residues 258–334 form a head domain (RuvB-H) region; sequence SEGFDYMDRK…YQHFELIKPE (77 aa). Residues arginine 294, arginine 313, and arginine 318 each coordinate DNA.

It belongs to the RuvB family. Homohexamer. Forms an RuvA(8)-RuvB(12)-Holliday junction (HJ) complex. HJ DNA is sandwiched between 2 RuvA tetramers; dsDNA enters through RuvA and exits via RuvB. An RuvB hexamer assembles on each DNA strand where it exits the tetramer. Each RuvB hexamer is contacted by two RuvA subunits (via domain III) on 2 adjacent RuvB subunits; this complex drives branch migration. In the full resolvosome a probable DNA-RuvA(4)-RuvB(12)-RuvC(2) complex forms which resolves the HJ.

The protein localises to the cytoplasm. The catalysed reaction is ATP + H2O = ADP + phosphate + H(+). Its function is as follows. The RuvA-RuvB-RuvC complex processes Holliday junction (HJ) DNA during genetic recombination and DNA repair, while the RuvA-RuvB complex plays an important role in the rescue of blocked DNA replication forks via replication fork reversal (RFR). RuvA specifically binds to HJ cruciform DNA, conferring on it an open structure. The RuvB hexamer acts as an ATP-dependent pump, pulling dsDNA into and through the RuvAB complex. RuvB forms 2 homohexamers on either side of HJ DNA bound by 1 or 2 RuvA tetramers; 4 subunits per hexamer contact DNA at a time. Coordinated motions by a converter formed by DNA-disengaged RuvB subunits stimulates ATP hydrolysis and nucleotide exchange. Immobilization of the converter enables RuvB to convert the ATP-contained energy into a lever motion, pulling 2 nucleotides of DNA out of the RuvA tetramer per ATP hydrolyzed, thus driving DNA branch migration. The RuvB motors rotate together with the DNA substrate, which together with the progressing nucleotide cycle form the mechanistic basis for DNA recombination by continuous HJ branch migration. Branch migration allows RuvC to scan DNA until it finds its consensus sequence, where it cleaves and resolves cruciform DNA. The polypeptide is Holliday junction branch migration complex subunit RuvB (Shewanella baltica (strain OS223)).